Consider the following 311-residue polypeptide: Ferritin-like catalase Nec2 (311 aa).

The N-terminal stretch at Met1 to Ser25 is a signal peptide. Residues Asn128, Asn257, and Asn289 are each glycosylated (N-linked (GlcNAc...) asparagine).

Forms homomultimers. As to expression, observed in all flowers organs; mainly expressed in nectaries and, to a lower extent, in petals and ovules, as well as in stigmas and calyx at low levels.

The enzyme catalyses 2 H2O2 = O2 + 2 H2O. Functionally, involved in the production of blood-red nectar containing the alkaloid nesocodin and that serves as a visual attractant for pollinator visitation, including vertebrates such as Phelsuma geckos. The nectar is initially acidic and pale yellow, but slowly becomes alkaline before turning into red within 24 hours. Together with NEC1 and NEC3, facilitates the condensation of sinapaldehyde ((E)-3,5-dimethoxy-4-hydroxycinnamaldehyde) and proline to form nesocodin, a pigment with a stable imine bond. Protects nesocodin from degradation by hydrogen peroxide H(2)O(2) by catalyzing the degradation of H(2)O(2) into water H(2)O and dioxygene O(2). In Nesocodon mauritianus (Blue Mauritius bellflower), this protein is Ferritin-like catalase Nec2.